Consider the following 184-residue polypeptide: uncharacterized protein (184 aa).

This is an uncharacterized protein from Clostridium acetobutylicum (strain ATCC 824 / DSM 792 / JCM 1419 / IAM 19013 / LMG 5710 / NBRC 13948 / NRRL B-527 / VKM B-1787 / 2291 / W).